Reading from the N-terminus, the 142-residue chain is Transcriptional regulator MraZ (142 aa).

2 SpoVT-AbrB domains span residues 5–51 (ASAL…PRPE) and 77–120 (AMDV…DAQT).

It belongs to the MraZ family. As to quaternary structure, forms oligomers.

It is found in the cytoplasm. It localises to the nucleoid. The polypeptide is Transcriptional regulator MraZ (Burkholderia mallei (strain NCTC 10247)).